The following is a 352-amino-acid chain: PDZ and LIM domain protein 2 (352 aa).

The PDZ domain occupies 1 to 84 (MALTVDVAGP…PLRLQLDRSQ (84 aa)). Disordered stretches follow at residues 67 to 97 (SKIR…DSSL) and 111 to 149 (YTES…TGEA). Residues 81–95 (DRSQATSPGQTNGDS) are compositionally biased toward polar residues. Over residues 111 to 135 (YTESQSSLRSSYSSPTSLSPRAGSP) the composition is skewed to low complexity. Position 124 is a phosphoserine (serine 124). At threonine 126 the chain carries Phosphothreonine. Residues serine 127, serine 129, serine 134, serine 137, serine 143, serine 161, serine 197, serine 203, serine 213, and serine 266 each carry the phosphoserine modification. The segment at 170-213 (LSYSGRPGSRQAGLGRAGDSAVLVLPPSPGPRSSRPSMDSEGGS) is disordered. The region spanning 284 to 344 (HTCEKCSTSI…EKHARQRYSA (61 aa)) is the LIM zinc-binding domain.

Interacts with alpha-actinins ACTN1 and ACTN4, FLNA and MYH9. Interacts (via LIM zinc-binding domain) with MKRN2.

It localises to the cytoplasm. Its subcellular location is the nucleus. The protein localises to the cytoskeleton. Its function is as follows. Probable adapter protein located at the actin cytoskeleton that promotes cell attachment. Necessary for the migratory capacity of epithelial cells. Overexpression enhances cell adhesion to collagen and fibronectin and suppresses anchorage independent growth. May contribute to tumor cell migratory capacity. The polypeptide is PDZ and LIM domain protein 2 (PDLIM2) (Homo sapiens (Human)).